The chain runs to 233 residues: Phosphoribosylformylglycinamidine synthase subunit PurQ (233 aa).

In terms of domain architecture, Glutamine amidotransferase type-1 spans 3–233 (SAILVFPGIN…GLVAHLERAA (231 aa)). The active-site Nucleophile is Cys87. Residues His204 and Glu206 contribute to the active site.

As to quaternary structure, part of the FGAM synthase complex composed of 1 PurL, 1 PurQ and 2 PurS subunits.

Its subcellular location is the cytoplasm. It carries out the reaction N(2)-formyl-N(1)-(5-phospho-beta-D-ribosyl)glycinamide + L-glutamine + ATP + H2O = 2-formamido-N(1)-(5-O-phospho-beta-D-ribosyl)acetamidine + L-glutamate + ADP + phosphate + H(+). It catalyses the reaction L-glutamine + H2O = L-glutamate + NH4(+). It participates in purine metabolism; IMP biosynthesis via de novo pathway; 5-amino-1-(5-phospho-D-ribosyl)imidazole from N(2)-formyl-N(1)-(5-phospho-D-ribosyl)glycinamide: step 1/2. Its function is as follows. Part of the phosphoribosylformylglycinamidine synthase complex involved in the purines biosynthetic pathway. Catalyzes the ATP-dependent conversion of formylglycinamide ribonucleotide (FGAR) and glutamine to yield formylglycinamidine ribonucleotide (FGAM) and glutamate. The FGAM synthase complex is composed of three subunits. PurQ produces an ammonia molecule by converting glutamine to glutamate. PurL transfers the ammonia molecule to FGAR to form FGAM in an ATP-dependent manner. PurS interacts with PurQ and PurL and is thought to assist in the transfer of the ammonia molecule from PurQ to PurL. The polypeptide is Phosphoribosylformylglycinamidine synthase subunit PurQ (Nitrobacter hamburgensis (strain DSM 10229 / NCIMB 13809 / X14)).